A 566-amino-acid polypeptide reads, in one-letter code: Type 3 secretion system secretin (566 aa).

Positions 1-22 are cleaved as a signal peptide; the sequence is MKKFNIKSLTLLIVLLPLIVNA.

This sequence belongs to the bacterial secretin family. T3SS SctC subfamily. As to quaternary structure, the core secretion machinery of the T3SS is composed of approximately 20 different proteins, including cytoplasmic components, a base, an export apparatus and a needle. This subunit is part of the base, which anchors the injectisome in the bacterial cell envelope. Forms a stable homooligomeric complex.

It localises to the cell outer membrane. Its function is as follows. Component of the type III secretion system (T3SS), also called injectisome, which is used to inject bacterial effector proteins into eukaryotic host cells. Forms a ring-shaped multimeric structure with an apparent central pore in the outer membrane. In Shigella sonnei, this protein is Type 3 secretion system secretin.